Consider the following 44-residue polypeptide: YADAIFTNSYRKILGQLSARKLLQDIMNRQQGERNQEQGAKVRL.

A Leucine amide modification is found at Leu-44.

This sequence belongs to the glucagon family.

It is found in the secreted. Functionally, GRF is released by the hypothalamus and acts on the adenohypophyse to stimulate the secretion of growth hormone. In Ovis aries (Sheep), this protein is Somatoliberin (GHRH).